A 433-amino-acid chain; its full sequence is tRNA(Ile2) 2-agmatinylcytidine synthetase TiaS (433 aa).

This sequence belongs to the TiaS family.

The protein localises to the cytoplasm. The enzyme catalyses cytidine(34) in tRNA(Ile2) + agmatine + ATP + H2O = 2-agmatinylcytidine(34) in tRNA(Ile2) + AMP + 2 phosphate + 2 H(+). In terms of biological role, ATP-dependent agmatine transferase that catalyzes the formation of 2-agmatinylcytidine (agm2C) at the wobble position (C34) of tRNA(Ile2), converting the codon specificity from AUG to AUA. The polypeptide is tRNA(Ile2) 2-agmatinylcytidine synthetase TiaS (Methanopyrus kandleri (strain AV19 / DSM 6324 / JCM 9639 / NBRC 100938)).